The primary structure comprises 156 residues: Anaerobic ribonucleoside-triphosphate reductase-activating protein (156 aa).

[4Fe-4S] cluster contacts are provided by C26, C30, and C33. S-adenosyl-L-methionine contacts are provided by residues 32-34 (GCY) and G72.

The protein belongs to the organic radical-activating enzymes family. As to quaternary structure, forms a tetramer composed of two NrdD and two NrdG subunits. The cofactor is [4Fe-4S] cluster.

The catalysed reaction is glycyl-[protein] + reduced [flavodoxin] + S-adenosyl-L-methionine = glycin-2-yl radical-[protein] + semiquinone [flavodoxin] + 5'-deoxyadenosine + L-methionine + H(+). Functionally, activation of anaerobic ribonucleoside-triphosphate reductase under anaerobic conditions by generation of an organic free radical, using S-adenosylmethionine and reduced flavodoxin as cosubstrates to produce 5'-deoxy-adenosine. In Escherichia coli (Bacteriophage T4), this protein is Anaerobic ribonucleoside-triphosphate reductase-activating protein (NRDG).